The sequence spans 467 residues: Hexon protein (467 aa).

The interval 1 to 54 (AYNALAPKGAPNSCEWEQEEPTQEMAGELEDEEEAEEEEAEEEAEAPQAGQKVK) is disordered. Residues 16–45 (WEQEEPTQEMAGELEDEEEAEEEEAEEEAE) are compositionally biased toward acidic residues.

This sequence belongs to the adenoviridae hexon protein family. Homotrimer. Interacts with the capsid vertex protein; this interaction binds the peripentonal hexons to the neighboring penton base. Interacts with the hexon-linking protein; this interaction tethers the hexons surrounding the penton to those situated in the central plate of the facet. Interacts with the hexon-interlacing protein; this interaction lashes the hexons together. Interacts with host dyneins DYNC1LI1 and DYNC1I2; this interaction might be involved in intracellular microtubule-dependent transport of incoming viral capsid. Interacts with the shutoff protein; this interaction allows folding and formation of hexons trimers. Interacts with pre-protein VI; this interaction probably allows nuclear import of hexon trimers and possibly pre-capsid assembly.

The protein localises to the virion. The protein resides in the host nucleus. Its function is as follows. Major capsid protein that self-associates to form 240 hexon trimers, each in the shape of a hexagon, building most of the pseudo T=25 capsid. Assembled into trimeric units with the help of the chaperone shutoff protein. Transported by pre-protein VI to the nucleus where it associates with other structural proteins to form an empty capsid. Might be involved, through its interaction with host dyneins, in the intracellular microtubule-dependent transport of incoming viral capsid to the nucleus. The polypeptide is Hexon protein (Homo sapiens (Human)).